A 434-amino-acid polypeptide reads, in one-letter code: Trigger factor (434 aa).

One can recognise a PPIase FKBP-type domain in the interval 161–246 (EDRVTVDFSG…LKKVEERELP (86 aa)).

It belongs to the FKBP-type PPIase family. Tig subfamily.

It is found in the cytoplasm. The catalysed reaction is [protein]-peptidylproline (omega=180) = [protein]-peptidylproline (omega=0). Involved in protein export. Acts as a chaperone by maintaining the newly synthesized protein in an open conformation. Functions as a peptidyl-prolyl cis-trans isomerase. The protein is Trigger factor of Serratia proteamaculans (strain 568).